Consider the following 541-residue polypeptide: Chaperonin GroEL (541 aa).

ATP contacts are provided by residues 29-32 (TLGP), 86-90 (DGTTT), Gly413, 476-478 (NAA), and Asp492.

This sequence belongs to the chaperonin (HSP60) family. In terms of assembly, forms a cylinder of 14 subunits composed of two heptameric rings stacked back-to-back. Interacts with the co-chaperonin GroES.

The protein resides in the cytoplasm. The enzyme catalyses ATP + H2O + a folded polypeptide = ADP + phosphate + an unfolded polypeptide.. Its function is as follows. Together with its co-chaperonin GroES, plays an essential role in assisting protein folding. The GroEL-GroES system forms a nano-cage that allows encapsulation of the non-native substrate proteins and provides a physical environment optimized to promote and accelerate protein folding. This Rhodococcus hoagii (Corynebacterium equii) protein is Chaperonin GroEL.